Reading from the N-terminus, the 256-residue chain is Small ribosomal subunit protein eS1 (256 aa).

Alanine 2 is subject to N-acetylalanine; partial.

This sequence belongs to the eukaryotic ribosomal protein eS1 family. Component of the small ribosomal subunit. Mature ribosomes consist of a small (40S) and a large (60S) subunit. The 40S subunit contains about 33 different proteins and 1 molecule of RNA (18S). The 60S subunit contains about 49 different proteins and 3 molecules of RNA (25S, 5.8S and 5S).

It is found in the cytoplasm. This Candida tropicalis (strain ATCC MYA-3404 / T1) (Yeast) protein is Small ribosomal subunit protein eS1.